Consider the following 332-residue polypeptide: Beta-hexosaminidase (332 aa).

Substrate-binding positions include Asp62, Arg70, Arg131, and 161 to 162 (KH). Catalysis depends on His174, which acts as the Proton donor/acceptor. The Nucleophile role is filled by Asp244.

Belongs to the glycosyl hydrolase 3 family. NagZ subfamily.

It localises to the cytoplasm. It catalyses the reaction Hydrolysis of terminal non-reducing N-acetyl-D-hexosamine residues in N-acetyl-beta-D-hexosaminides.. Its pathway is cell wall biogenesis; peptidoglycan recycling. Its function is as follows. Plays a role in peptidoglycan recycling by cleaving the terminal beta-1,4-linked N-acetylglucosamine (GlcNAc) from peptide-linked peptidoglycan fragments, giving rise to free GlcNAc, anhydro-N-acetylmuramic acid and anhydro-N-acetylmuramic acid-linked peptides. The polypeptide is Beta-hexosaminidase (Pseudomonas aeruginosa (strain LESB58)).